A 587-amino-acid polypeptide reads, in one-letter code: Aspartate--tRNA ligase (587 aa).

Glu-174 serves as a coordination point for L-aspartate. The aspartate stretch occupies residues 198–201; sequence QITK. Arg-220 contributes to the L-aspartate binding site. ATP is bound by residues 220–222 and Gln-229; that span reads RDE. His-443 lines the L-aspartate pocket. Glu-477 is an ATP binding site. Arg-484 contacts L-aspartate. 529–532 serves as a coordination point for ATP; it reads GLDR.

The protein belongs to the class-II aminoacyl-tRNA synthetase family. Type 1 subfamily. Homodimer.

The protein localises to the cytoplasm. It carries out the reaction tRNA(Asp) + L-aspartate + ATP = L-aspartyl-tRNA(Asp) + AMP + diphosphate. Its function is as follows. Catalyzes the attachment of L-aspartate to tRNA(Asp) in a two-step reaction: L-aspartate is first activated by ATP to form Asp-AMP and then transferred to the acceptor end of tRNA(Asp). This is Aspartate--tRNA ligase from Streptococcus pneumoniae (strain Taiwan19F-14).